Reading from the N-terminus, the 177-residue chain is Cytidylate kinase (177 aa).

An ATP-binding site is contributed by 8–16 (GPPGGGKTT).

Belongs to the cytidylate kinase family. Type 2 subfamily.

It is found in the cytoplasm. The enzyme catalyses CMP + ATP = CDP + ADP. It catalyses the reaction dCMP + ATP = dCDP + ADP. In Staphylothermus marinus (strain ATCC 43588 / DSM 3639 / JCM 9404 / F1), this protein is Cytidylate kinase.